A 331-amino-acid chain; its full sequence is UPF0324 membrane protein SAR0338 (331 aa).

11 consecutive transmembrane segments (helical) span residues 9-26 (FMIG…SFLA), 31-48 (ILDK…AILY), 69-88 (LLRF…DIIG), 93-115 (LLAI…NKLL), 122-144 (ALLL…APIF), 154-176 (SIGI…YAIF), 183-202 (YGAW…LAGG), 217-234 (LGRV…ILIM), 247-269 (ISIP…VTIP), 273-295 (LNIL…GLNV), and 308-330 (LMTI…HWLY).

Belongs to the UPF0324 family.

It localises to the cell membrane. This is UPF0324 membrane protein SAR0338 from Staphylococcus aureus (strain MRSA252).